We begin with the raw amino-acid sequence, 544 residues long: O-phosphoserine--tRNA(Cys) ligase (544 aa).

Substrate is bound by residues 194–196 (HMT), 239–241 (SAS), 281–282 (YY), and Asn335.

Belongs to the class-II aminoacyl-tRNA synthetase family. O-phosphoseryl-tRNA(Cys) synthetase subfamily. Homotetramer. Interacts with SepCysS.

The catalysed reaction is tRNA(Cys) + O-phospho-L-serine + ATP = O-phospho-L-seryl-tRNA(Cys) + AMP + diphosphate. Catalyzes the attachment of O-phosphoserine (Sep) to tRNA(Cys). The polypeptide is O-phosphoserine--tRNA(Cys) ligase (Methanopyrus kandleri (strain AV19 / DSM 6324 / JCM 9639 / NBRC 100938)).